We begin with the raw amino-acid sequence, 131 residues long: Translation initiation factor 5A (131 aa).

Residue K36 is modified to Hypusine.

Belongs to the eIF-5A family.

It localises to the cytoplasm. In terms of biological role, functions by promoting the formation of the first peptide bond. This Saccharolobus islandicus (strain Y.N.15.51 / Yellowstone #2) (Sulfolobus islandicus) protein is Translation initiation factor 5A (eIF5A).